The primary structure comprises 111 residues: DIVLTQSPASLAVSLGQRATISCRASKSVSTSGYSYMHWYQQKPGQPPKLLIYLASNLESGVPARFSGSGSGTDFTLNIHPVEEEDAATYYCQHSRELPLTFGAGTKLELK.

The framework-1 stretch occupies residues 1-23 (DIVLTQSPASLAVSLGQRATISC). A disulfide bridge connects residues cysteine 23 and cysteine 92. The segment at 24–38 (RASKSVSTSGYSYMH) is complementarity-determining-1. Residues 39-53 (WYQQKPGQPPKLLIY) are framework-2. A complementarity-determining-2 region spans residues 54 to 60 (LASNLES). The tract at residues 61-92 (GVPARFSGSGSGTDFTLNIHPVEEEDAATYYC) is framework-3. Residues 93 to 101 (QHSRELPLT) form a complementarity-determining-3 region. Residues 102–111 (FGAGTKLELK) are framework-4.

This is Ig kappa chain V-III region PC 7175 from Mus musculus (Mouse).